We begin with the raw amino-acid sequence, 692 residues long: Protein artemis (692 aa).

Thr380 is modified (phosphothreonine). The residue at position 385 (Ser385) is a Phosphoserine. Disordered regions lie at residues 503-555 (RLEN…DSQS) and 640-660 (STNA…PEAE). The span at 507–520 (FPSSTEAGGSQSPK) shows a compositional bias: polar residues. The span at 530-543 (THISSQNSSQSTHI) shows a compositional bias: low complexity. Polar residues-rich tracts occupy residues 544 to 555 (TEQGSQGWDSQS) and 640 to 650 (STNADSQSSSD). Ser645 carries the post-translational modification Phosphoserine; by ATM.

The protein belongs to the DNA repair metallo-beta-lactamase (DRMBL) family. In terms of assembly, interacts with LIG4; the interaction is direct. Interacts with ATM. Interacts with BRCA1. Interacts with PRKDC. Interacts with TP53BP1. Also exhibits ATM- and phosphorylation-dependent interaction with the MRN complex, composed of MRE11, RAD50, and NBN. Post-translationally, phosphorylation on undefined residues by PRKDC may stimulate endonucleolytic activity on 5' and 3' hairpins and overhangs. PRKDC must remain present, even after phosphorylation, for efficient hairpin opening. Also phosphorylated by ATM in response to ionizing radiation (IR) and by ATR in response to ultraviolet (UV) radiation.

The protein resides in the nucleus. Its function is as follows. Required for V(D)J recombination, the process by which exons encoding the antigen-binding domains of immunoglobulins and T-cell receptor proteins are assembled from individual V, (D), and J gene segments. V(D)J recombination is initiated by the lymphoid specific RAG endonuclease complex, which generates site specific DNA double strand breaks (DSBs). These DSBs present two types of DNA end structures: hairpin sealed coding ends and phosphorylated blunt signal ends. These ends are independently repaired by the non homologous end joining (NHEJ) pathway to form coding and signal joints respectively. This protein exhibits single-strand specific 5'-3' exonuclease activity in isolation, and acquires endonucleolytic activity on 5' and 3' hairpins and overhangs when in a complex with PRKDC. The latter activity is required specifically for the resolution of closed hairpins prior to the formation of the coding joint. May also be required for the repair of complex DSBs induced by ionizing radiation, which require substantial end-processing prior to religation by NHEJ. The chain is Protein artemis (DCLRE1C) from Pongo abelii (Sumatran orangutan).